A 213-amino-acid polypeptide reads, in one-letter code: LexA repressor (213 aa).

The H-T-H motif DNA-binding region spans 29–49; the sequence is RAEIAQALGFRSPNAAEDHLK. Catalysis depends on for autocatalytic cleavage activity residues serine 131 and lysine 168.

It belongs to the peptidase S24 family. Homodimer.

It catalyses the reaction Hydrolysis of Ala-|-Gly bond in repressor LexA.. Represses a number of genes involved in the response to DNA damage (SOS response), including recA and lexA. In the presence of single-stranded DNA, RecA interacts with LexA causing an autocatalytic cleavage which disrupts the DNA-binding part of LexA, leading to derepression of the SOS regulon and eventually DNA repair. In Bordetella avium (strain 197N), this protein is LexA repressor.